Here is a 539-residue protein sequence, read N- to C-terminus: Chaperonin GroEL (539 aa).

ATP is bound by residues 29–32 (TIGP), 86–90 (DGTTT), Gly-413, 476–478 (NAA), and Asp-492.

Belongs to the chaperonin (HSP60) family. In terms of assembly, forms a cylinder of 14 subunits composed of two heptameric rings stacked back-to-back. Interacts with the co-chaperonin GroES.

It is found in the cytoplasm. The enzyme catalyses ATP + H2O + a folded polypeptide = ADP + phosphate + an unfolded polypeptide.. Together with its co-chaperonin GroES, plays an essential role in assisting protein folding. The GroEL-GroES system forms a nano-cage that allows encapsulation of the non-native substrate proteins and provides a physical environment optimized to promote and accelerate protein folding. The chain is Chaperonin GroEL from Leuconostoc mesenteroides subsp. mesenteroides (strain ATCC 8293 / DSM 20343 / BCRC 11652 / CCM 1803 / JCM 6124 / NCDO 523 / NBRC 100496 / NCIMB 8023 / NCTC 12954 / NRRL B-1118 / 37Y).